Consider the following 178-residue polypeptide: SPbeta prophage-derived uncharacterized protein YonC (178 aa).

The protein is SPbeta prophage-derived uncharacterized protein YonC (yonC) of Bacillus subtilis (strain 168).